Consider the following 363-residue polypeptide: 3-isopropylmalate dehydrogenase (363 aa).

78–91 (GPKWEHLPPAEQPE) lines the NAD(+) pocket. 4 residues coordinate substrate: Arg-99, Arg-109, Arg-138, and Asp-227. The Mg(2+) site is built by Asp-227, Asp-251, and Asp-255. NAD(+) is bound at residue 285–297 (GSAPDIAGKNIAN).

It belongs to the isocitrate and isopropylmalate dehydrogenases family. LeuB type 1 subfamily. In terms of assembly, homodimer. Requires Mg(2+) as cofactor. It depends on Mn(2+) as a cofactor.

It is found in the cytoplasm. It carries out the reaction (2R,3S)-3-isopropylmalate + NAD(+) = 4-methyl-2-oxopentanoate + CO2 + NADH. It participates in amino-acid biosynthesis; L-leucine biosynthesis; L-leucine from 3-methyl-2-oxobutanoate: step 3/4. Functionally, catalyzes the oxidation of 3-carboxy-2-hydroxy-4-methylpentanoate (3-isopropylmalate) to 3-carboxy-4-methyl-2-oxopentanoate. The product decarboxylates to 4-methyl-2 oxopentanoate. This Yersinia pestis protein is 3-isopropylmalate dehydrogenase.